The primary structure comprises 271 residues: Insulin-like growth factor-binding protein 5 (271 aa).

The signal sequence occupies residues 1–19 (MVLTAVLLLLAACAGSAQG). Residues 22–102 (SFVHCEPCDE…LHGRGVCLNE (81 aa)) form the IGFBP N-terminal domain. 6 cysteine pairs are disulfide-bonded: C26–C52, C29–C54, C37–C55, C44–C58, C66–C79, and C73–C99. Positions 109 to 121 (AKIERDSREHEEP) are enriched in basic and acidic residues. A disordered region spans residues 109 to 129 (AKIERDSREHEEPTTSEMAEE). S115 carries the phosphoserine modification. The Thyroglobulin type-1 domain maps to 188 to 262 (QGPCRRHMEA…MEYVDGDFQC (75 aa)). 3 disulfide bridges follow: C191-C218, C229-C240, and C242-C262.

In terms of assembly, interacts with IGF1; this interaction enhances the growth stimulatory effects of IGF1 on fibroblasts. Interacts with CAV1; this interaction allows trafficking of IGFBP5 from the plasma membrane to the nucleus. Interacts with NCL; this interaction is necessary for IGFBP5 localization to the nucleus.

It localises to the secreted. Its subcellular location is the cytoplasm. It is found in the nucleus. In terms of biological role, multifunctional protein that plays a critical role in regulating the availability of IGFs to their receptors and thereby regulates IGF-mediated cellular processes including proliferation, differentiation, and apoptosis in a cell-type specific manner. Increases the cell proliferation of osteoblasts, intestinal smooth muscle cells and neuroblastoma cells. Enhances adhesion and survival of epithelial cells but decreases adhesion of mesenchymal cells. Once secreted, acts as a major mediator of mTORC1-dependent feedback inhibition of IGF1 signaling. Also plays a role in the induction of extracellular matrix (ECM) production and deposition independently of its nuclear translocation and binding to IGFs. Acts itself as a growth factor that can act independently of IGFs to regulate bone formation. Acts as a ligand for the ROR1 receptor which triggers formation of ROR1/HER2 heterodimer to enhance CREB oncogenic signaling. The polypeptide is Insulin-like growth factor-binding protein 5 (IGFBP5) (Bos taurus (Bovine)).